We begin with the raw amino-acid sequence, 496 residues long: Iroquois-class homeodomain protein irx-4 (496 aa).

Residues 141 to 203 constitute a DNA-binding region (homeobox; TALE-type); sequence GSTRRKNATR…NARRRLKKEN (63 aa). The interval 203–236 is disordered; it reads NKMTWPPRNKCSDEKRPYDEEEEEEEEEDSQKAT. Residues 221 to 231 show a composition bias toward acidic residues; sequence DEEEEEEEEED.

Belongs to the TALE/IRO homeobox family. In terms of tissue distribution, expressed in the neural plate in overlapping patterns with other irx members, which all share an anterior border of expression. Broadly expressed in the tailbud rhombencephalon (hindbrain). Outside the nervous system and at tailbud stages, expressed in the developing otic vesicle, branchial arches and prospective heart region.

The protein localises to the nucleus. Acts partially redundantly with other irx members in neural patterning. Required for formation of the posterior forebrain, midbrain, hindbrain, and to a lesser extent, spinal cord. Patterns the neuroectoderm in both the anterior/posterior and dorsal/ventral axes. Does not appear to play a role in pronephros kidney development. In Xenopus tropicalis (Western clawed frog), this protein is Iroquois-class homeodomain protein irx-4.